The sequence spans 99 residues: Mitochondrial import receptor subunit TOM9-2 (99 aa).

Residues 2–51 (AAKRIGAGKSGGGDPNILARISNSEIVSQGRRAAGDAVEVSKKLLRSTGK) lie on the Cytoplasmic side of the membrane. A helical transmembrane segment spans residues 52–69 (AAWIAGTTFLILVVPLII). Topologically, residues 70 to 99 (EMDREAQINEIELQQASLLGAPPSPMQRGL) are mitochondrial intermembrane.

It belongs to the Tom22 family. Forms part of the preprotein translocase complex of the outer mitochondrial membrane (TOM complex) which consists of at least 6 different proteins (TOM5, TOM6, TOM7, TOM20, TOM22/TOM9 and TOM40). Expressed in young cotyledons, roots, flowers and leaves.

Its subcellular location is the mitochondrion outer membrane. Its function is as follows. Central component of the receptor complex responsible for the recognition and translocation of cytosolically synthesized mitochondrial preproteins. Together with TOM20 functions as the transit peptide receptor at the surface of the mitochondrion outer membrane and facilitates the movement of preproteins into the translocation pore. In Arabidopsis thaliana (Mouse-ear cress), this protein is Mitochondrial import receptor subunit TOM9-2 (TOM9-2).